The primary structure comprises 5206 residues: Multifunctional-autoprocessing repeats-in-toxin (5206 aa).

Positions methionine 1–alanine 19 are cleaved as a signal peptide. 39 RtxA repeats span residues glycine 101–serine 118, glycine 121–threonine 138, glycine 141–leucine 157, glycine 161–threonine 184, glycine 187–threonine 204, glycine 207–threonine 224, glycine 255–histidine 272, glycine 275–phenylalanine 291, glycine 584–tyrosine 601, glycine 604–threonine 620, glycine 624–threonine 641, glycine 644–glycine 658, alanine 741–glycine 753, methionine 759–glycine 771, alanine 782–leucine 798, methionine 801–threonine 816, methionine 820–threonine 835, glycine 841–leucine 855, methionine 858–alanine 875, methionine 877–asparagine 891, methionine 896–aspartate 910, methionine 915–alanine 932, methionine 934–leucine 950, methionine 972–asparagine 984, methionine 991–serine 1006, glycine 1031–leucine 1043, alanine 1067–aspartate 1079, alanine 1087–valine 1102, glycine 1110–isoleucine 1122, alanine 1125–asparagine 1142, tryptophan 1145–arginine 1159, alanine 1163–valine 1179, glycine 1184–threonine 1199, alanine 1201–valine 1217, alanine 1220–phenylalanine 1236, lysine 1242–threonine 1256, alanine 1258–threonine 1275, alanine 1296–alanine 1313, and methionine 1315–asparagine 1332. Residues serine 1606–leucine 1626 show a composition bias toward polar residues. 2 disordered regions span residues serine 1606–alanine 1682 and isoleucine 1738–alanine 1895. Residues serine 1627–glutamine 1646 are compositionally biased toward basic and acidic residues. Over residues glycine 1652–alanine 1671 the composition is skewed to polar residues. Residues alanine 1778–alanine 1805 show a composition bias toward basic and acidic residues. Over residues asparagine 1825–alanine 1834 the composition is skewed to polar residues. Over residues lysine 1835–glycine 1849 the composition is skewed to basic and acidic residues. Residues serine 1870–alanine 1880 show a composition bias toward polar residues. Residues glutamate 2377–leucine 2461 are membrane localization region (MLD). The tract at residues glutamate 2537–leucine 2901 is rho inactivation domain (RID). Residues valine 2998–alanine 3113 form an ABH effector region region. A Peptidase C80 domain is found at proline 4111–tryptophan 4295. 1D-myo-inositol hexakisphosphate is bound by residues glutamate 4117–arginine 4119, lysine 4144–histidine 4145, and arginine 4175. Residue histidine 4181 is the For cysteine protease activity of the active site. Serine 4226 provides a ligand contact to 1D-myo-inositol hexakisphosphate. Residue cysteine 4230 is the Nucleophile; for cysteine protease activity of the active site. Residues serine 4259–arginine 4261, arginine 4272–lysine 4273, lysine 4285, and lysine 4290 each bind 1D-myo-inositol hexakisphosphate. Disordered regions lie at residues glycine 4333–lysine 4362 and leucine 4738–aspartate 4779. A compositionally biased stretch (low complexity) spans serine 4750–alanine 4762.

The cofactor is Mg(2+).

Its subcellular location is the secreted. The protein resides in the host cytoplasm. The protein localises to the host cytosol. It localises to the host cell membrane. It catalyses the reaction L-lysyl-/S-(2E,6E,10E)-geranylgeranyl-L-cysteinyl-[protein] + hexadecanoyl-CoA = N(6)-hexadecanoyl-L-lysyl-/S-(2E,6E,10E)-geranylgeranyl-L-cysteinyl-[protein] + CoA + H(+). It carries out the reaction L-lysyl-/S-(2E,6E,10E)-geranylgeranyl-L-cysteinyl-[protein] + dodecanoyl-CoA = N(6)-dodecanoyl-L-lysyl-/S-(2E,6E,10E)-geranylgeranyl-L-cysteinyl-[protein] + CoA + H(+). The enzyme catalyses L-lysyl-/S-(2E,6E,10E)-geranylgeranyl-L-cysteinyl-[protein] + decanoyl-CoA = N(6)-decanoyl-L-lysyl-/S-(2E,6E,10E)-geranylgeranyl-L-cysteinyl-[protein] + CoA + H(+). Functionally, precursor of a multifunctional toxin that causes destruction of the actin cytoskeleton by covalent cross-linking of actin and inactivation of Rho GTPases when translocated into the host cytoplasm. Upon translocation into the host cell, undergoes autoprocessing in cis mediated by the peptidase C80 domain (also named CPD domain): the protease activity is activated upon binding inositol hexakisphosphate (InsP6) present at the host cell membrane and delivers the Cysteine protease domain-containing toxin F3 chain to the host cytosol. The Cysteine protease domain-containing toxin F3 chain will then further cleave and release effector toxin chains that cause disassembly of the actin cytoskeleton and enhance V.vulnificus colonization of the small intestine, possibly by facilitating evasion of phagocytic cells. In terms of biological role, following autocatalytic cleavage in cis, this chain mediates processing in trans to release other individual toxin chains to the host cytosol. Released effector toxin chains cause disassembly of the actin cytoskeleton and enhance V.vulnificus colonization of the small intestine, possibly by facilitating evasion of phagocytic cells. Its function is as follows. Actin-directed toxin that catalyzes the covalent cross-linking of host cytoplasmic monomeric actin. Mediates the cross-link between 'Lys-50' of one monomer and 'Glu-270' of another actin monomer, resulting in formation of highly toxic actin oligomers that cause cell rounding. The toxin can be highly efficient at very low concentrations by acting on formin homology family proteins: toxic actin oligomers bind with high affinity to formins and adversely affect both nucleation and elongation abilities of formins, causing their potent inhibition in both profilin-dependent and independent manners. Acts as an acid--amino-acid ligase that transfers the gamma-phosphoryl group of ATP to the 'Glu-270' actin residue, resulting in the formation of an activated acyl phosphate intermediate. This intermediate is further hydrolyzed and the energy of hydrolysis is utilized for the formation of the amide bond between actin subunits. N-epsilon-fatty acyltransferase that mediates lysine-palmitoylation of host Rho GTPase proteins, with a strong preference for host Rac1. After delivery to the host cytosol, localizes to the host cell membrane where it palmitoylates host Rho GTPase proteins, resulting in loss of all active GTP-bound Rho and subsequent actin depolymerization. Prenylation of host Rac1 at the C-terminus is required for lysine-palmitoylation. Functionally, indirectly activates the small GTPase CDC42. The protein is Multifunctional-autoprocessing repeats-in-toxin of Vibrio vulnificus.